We begin with the raw amino-acid sequence, 181 residues long: 3-isopropylmalate dehydratase small subunit (181 aa).

The protein belongs to the LeuD family. LeuD type 2 subfamily. In terms of assembly, heterodimer of LeuC and LeuD.

The catalysed reaction is (2R,3S)-3-isopropylmalate = (2S)-2-isopropylmalate. It participates in amino-acid biosynthesis; L-leucine biosynthesis; L-leucine from 3-methyl-2-oxobutanoate: step 2/4. Functionally, catalyzes the isomerization between 2-isopropylmalate and 3-isopropylmalate, via the formation of 2-isopropylmaleate. This Deinococcus deserti (strain DSM 17065 / CIP 109153 / LMG 22923 / VCD115) protein is 3-isopropylmalate dehydratase small subunit.